Consider the following 154-residue polypeptide: Myoglobin (154 aa).

The 147-residue stretch at 2–148 (GLSDGEWQLV…FRNDMAAKYK (147 aa)) folds into the Globin domain. The residue at position 4 (Ser4) is a Phosphoserine. His65 contributes to the nitrite binding site. Residue His65 coordinates O2. Position 68 is a phosphothreonine (Thr68). Residue His94 participates in heme b binding.

Belongs to the globin family. As to quaternary structure, monomeric.

The protein localises to the cytoplasm. Its subcellular location is the sarcoplasm. The enzyme catalyses Fe(III)-heme b-[protein] + nitric oxide + H2O = Fe(II)-heme b-[protein] + nitrite + 2 H(+). It catalyses the reaction H2O2 + AH2 = A + 2 H2O. Its function is as follows. Monomeric heme protein which primary function is to store oxygen and facilitate its diffusion within muscle tissues. Reversibly binds oxygen through a pentacoordinated heme iron and enables its timely and efficient release as needed during periods of heightened demand. Depending on the oxidative conditions of tissues and cells, and in addition to its ability to bind oxygen, it also has a nitrite reductase activity whereby it regulates the production of bioactive nitric oxide. Under stress conditions, like hypoxia and anoxia, it also protects cells against reactive oxygen species thanks to its pseudoperoxidase activity. This chain is Myoglobin (MB), found in Didelphis virginiana (North American opossum).